Reading from the N-terminus, the 213-residue chain is Orotate phosphoribosyltransferase (213 aa).

Lys26 contributes to the 5-phospho-alpha-D-ribose 1-diphosphate binding site. Phe34–Phe35 contacts orotate. 5-phospho-alpha-D-ribose 1-diphosphate is bound by residues Tyr72–Lys73, Arg99, Lys100, Lys103, His105, and Asp124–Ala132. 2 residues coordinate orotate: Thr128 and Arg156.

The protein belongs to the purine/pyrimidine phosphoribosyltransferase family. PyrE subfamily. As to quaternary structure, homodimer. Mg(2+) is required as a cofactor.

The catalysed reaction is orotidine 5'-phosphate + diphosphate = orotate + 5-phospho-alpha-D-ribose 1-diphosphate. It participates in pyrimidine metabolism; UMP biosynthesis via de novo pathway; UMP from orotate: step 1/2. Catalyzes the transfer of a ribosyl phosphate group from 5-phosphoribose 1-diphosphate to orotate, leading to the formation of orotidine monophosphate (OMP). The polypeptide is Orotate phosphoribosyltransferase (Shigella flexneri).